The primary structure comprises 174 residues: Small ribosomal subunit protein uS12m (174 aa).

The protein belongs to the universal ribosomal protein uS12 family. Component of the mitochondrial small ribosomal subunit (mt-SSU). Mature N.crassa 74S mitochondrial ribosomes consist of a small (37S) and a large (54S) subunit. The 37S small subunit contains a 16S ribosomal RNA (16S mt-rRNA) and 32 different proteins. The 54S large subunit contains a 23S rRNA (23S mt-rRNA) and 42 different proteins. uS12m forms part of the decoding center of the mt-SSU.

The protein localises to the mitochondrion. Its function is as follows. Component of the mitochondrial ribosome (mitoribosome), a dedicated translation machinery responsible for the synthesis of mitochondrial genome-encoded proteins, including at least some of the essential transmembrane subunits of the mitochondrial respiratory chain. The mitoribosomes are attached to the mitochondrial inner membrane and translation products are cotranslationally integrated into the membrane. In Neurospora crassa (strain ATCC 24698 / 74-OR23-1A / CBS 708.71 / DSM 1257 / FGSC 987), this protein is Small ribosomal subunit protein uS12m (mrps12).